Reading from the N-terminus, the 306-residue chain is Mitochondrial substrate carrier family protein ucpA (306 aa).

The Mitochondrial intermembrane portion of the chain corresponds to 1–15 (MSVNLNNNKNNKNKV). 3 Solcar repeats span residues 13–103 (NKVA…ISNA), 112–204 (YFFL…CKNL), and 211–301 (DGIY…FKKL). Residues 16–36 (AIGFISGSLASICATTVTNPI) traverse the membrane as a helical segment. The Mitochondrial matrix portion of the chain corresponds to 37–83 (ELVKTRLQLQGELQLSQRIYNGVWDAFKQIYKTEGIRGLQSGLIPAY). The helical transmembrane segment at 84–103 (FSQATMQGIRLGSFDLISNA) threads the bilayer. Topologically, residues 104-117 (LGAKPNQDYFFLKN) are mitochondrial intermembrane. The chain crosses the membrane as a helical span at residues 118-138 (LLAGATAGAIGAAAGSPFDLV). At 139–174 (KVRMQAANMYKNDPQFVGYSSSFAAFKQIIQKEGFK) the chain is on the mitochondrial matrix side. Residues 175-195 (GLTRGMLTSAQRTAVGSAIQL) traverse the membrane as a helical segment. The Mitochondrial intermembrane segment spans residues 196 to 211 (STYGSCKNLVLNFVDD). A helical membrane pass occupies residues 212-232 (GIYAYIISSMVAGFIVTFGMN). Topologically, residues 233–276 (PFDVARTRLYFQGKGNSHGEIYKGLMDCVYKTVKKEGFGAVYKG) are mitochondrial matrix. A helical transmembrane segment spans residues 277 to 295 (FWAHYLRLGPHTILTLVFW). The Mitochondrial intermembrane portion of the chain corresponds to 296 to 306 (EQFKKLFSGEL).

Belongs to the mitochondrial carrier (TC 2.A.29) family.

It is found in the mitochondrion inner membrane. Its function is as follows. Mitochondrial solute carriers shuttle metabolites, nucleotides, and cofactors through the mitochondrial inner membrane. Transports oxaloacetate and sulfate. The chain is Mitochondrial substrate carrier family protein ucpA (ucpA) from Dictyostelium discoideum (Social amoeba).